Reading from the N-terminus, the 428-residue chain is MSSEFFIPDPEGQVPTAEGYFGAFGGKFIPEALVAAVDEVAVEYDKAKADPEFARELDDLLVHYTGRPSALTEVSRFAEHAGGARVFLKREDLNHTGSHKINNVLGQALLTRRMGKTRVIAETGAGQHGVATATACALFGLDCTIYMGEIDTQRQALNVARMRMLGAEVIAVKSGSRTLKDAINEAFRDWVANVDRTHYLFGTVAGPHPFPAMVRDFHRVIGVEARRQILERAGRLPDAAVACVGGGSNAIGLFHAFIPDTGVRLIGCEPAGHGLETGEHAATLTAGEPGILHGSRSYVLQDDEGQITEPYSISAGLDYPGIGPEHAYLKDSGRGEYRAVTDDAAMQALRLLSRTEGIIPAIESAHALAGALEIGKELGKDGLILVNLSGRGDKDMDTAARYFGLYDTDASVAADADSDIAEIEGDAK.

Lysine 100 is modified (N6-(pyridoxal phosphate)lysine).

It belongs to the TrpB family. Tetramer of two alpha and two beta chains. Pyridoxal 5'-phosphate is required as a cofactor.

The catalysed reaction is (1S,2R)-1-C-(indol-3-yl)glycerol 3-phosphate + L-serine = D-glyceraldehyde 3-phosphate + L-tryptophan + H2O. Its pathway is amino-acid biosynthesis; L-tryptophan biosynthesis; L-tryptophan from chorismate: step 5/5. Its function is as follows. The beta subunit is responsible for the synthesis of L-tryptophan from indole and L-serine. In Streptomyces avermitilis (strain ATCC 31267 / DSM 46492 / JCM 5070 / NBRC 14893 / NCIMB 12804 / NRRL 8165 / MA-4680), this protein is Tryptophan synthase beta chain.